The primary structure comprises 465 residues: Ribulose bisphosphate carboxylase large chain (465 aa).

Position 4 is an N6,N6,N6-trimethyllysine (Lys-4). Residues Asn-113 and Thr-163 each contribute to the substrate site. The Proton acceptor role is filled by Lys-165. Lys-167 is a binding site for substrate. 3 residues coordinate Mg(2+): Lys-191, Asp-193, and Glu-194. N6-carboxylysine is present on Lys-191. His-284 serves as the catalytic Proton acceptor. Residues Arg-285, His-317, and Ser-369 each coordinate substrate.

Belongs to the RuBisCO large chain family. Type I subfamily. As to quaternary structure, heterohexadecamer of 8 large chains and 8 small chains; disulfide-linked. The disulfide link is formed within the large subunit homodimers. Requires Mg(2+) as cofactor. Post-translationally, the disulfide bond which can form in the large chain dimeric partners within the hexadecamer appears to be associated with oxidative stress and protein turnover.

Its subcellular location is the plastid. The protein localises to the chloroplast. The enzyme catalyses 2 (2R)-3-phosphoglycerate + 2 H(+) = D-ribulose 1,5-bisphosphate + CO2 + H2O. It carries out the reaction D-ribulose 1,5-bisphosphate + O2 = 2-phosphoglycolate + (2R)-3-phosphoglycerate + 2 H(+). RuBisCO catalyzes two reactions: the carboxylation of D-ribulose 1,5-bisphosphate, the primary event in carbon dioxide fixation, as well as the oxidative fragmentation of the pentose substrate in the photorespiration process. Both reactions occur simultaneously and in competition at the same active site. The chain is Ribulose bisphosphate carboxylase large chain from Hamamelis mollis (Chinese witch hazel).